The chain runs to 498 residues: ADP,ATP carrier protein 1 (498 aa).

Residues 1–33 (MSTSKSENYLSELRKIIWPIEQYENKKFLPLAF) lie on the Cytoplasmic side of the membrane. The helical transmembrane segment at 34–54 (MMFCILLNYSTLRSIKDGFVV) threads the bilayer. Cys37 and Cys85 are disulfide-bonded. The Extracellular segment spans residues 55–67 (TDIGTESISFLKT). The chain crosses the membrane as a helical span at residues 68–88 (YIVLPSAVIAMIIYVKLCDIL). The Cytoplasmic segment spans residues 89 to 92 (KQEN). The chain crosses the membrane as a helical span at residues 93–113 (VFYVITSFFLGYFALFAFVLY). Residues 114–147 (PYPDLVHPDHKTIESLSLAYPNFKWFIKIVGKWS) are Extracellular-facing. A helical transmembrane segment spans residues 148–168 (FASFYTIAELWGTMMLSLLFW). The Cytoplasmic segment spans residues 169 to 184 (QFANQITKIAEAKRFY). The helical transmembrane segment at 185–205 (SMFGLLANLALPVTSVVIGYF) threads the bilayer. Residues 206–218 (LHEKTQIVAEHLK) lie on the Extracellular side of the membrane. Residues 219–239 (FVPLFVIMITSSFLIILTYRW) form a helical membrane-spanning segment. Over 240–279 (MNKNVLTDPRLYDPALVKEKKTKAKLSFIESLKMIFTSKY) the chain is Cytoplasmic. A helical membrane pass occupies residues 280-300 (VGYIALLIIAYGVSVNLVEGV). Residues 301–320 (WKSKVKELYPTKEAYTIYMG) lie on the Extracellular side of the membrane. Residues 321–341 (QFQFYQGWVAIAFMLIGSNIL) form a helical membrane-spanning segment. At 342 to 348 (RKVSWLT) the chain is on the cytoplasmic side. The helical transmembrane segment at 349-369 (AAMITPLMMFITGAAFFSFIF) threads the bilayer. Residues 370–379 (FDSVIAMNLT) lie on the Extracellular side of the membrane. The chain crosses the membrane as a helical span at residues 380–400 (GILASSPLTLAVMIGMIQNVL). Residues 401–438 (SKGVKYSLFDATKNMAYIPLDKDLRVKGQAAVEVIGGR) are Cytoplasmic-facing. 436–442 (GGRLGKS) is a binding site for ATP. Residues 439–459 (LGKSGGAIIQSTFFILFPVFG) form a helical membrane-spanning segment. At 460-465 (FIEATP) the chain is on the extracellular side. The chain crosses the membrane as a helical span at residues 466-486 (YFASIFFIIVILWIFAVKGLN). Topologically, residues 487–498 (KEYQVLVNKNEK) are cytoplasmic.

It belongs to the ADP/ATP translocase tlc family.

The protein localises to the cell membrane. In terms of biological role, provides the rickettsial cell with host ATP in exchange for rickettsial ADP. This is an obligate exchange system. This energy acquiring activity is an important component of rickettsial parasitism. In Rickettsia prowazekii (strain Madrid E), this protein is ADP,ATP carrier protein 1 (tlcA).